The primary structure comprises 437 residues: Cytochrome c biogenesis protein Ccs1 (437 aa).

Transmembrane regions (helical) follow at residues 23-43, 82-102, and 168-188; these read LQFS…GTII, TWWF…CSLS, and LAPI…VLGL.

Belongs to the Ccs1/CcsB family. May interact with CcsA.

The protein localises to the plastid. It localises to the chloroplast thylakoid membrane. In terms of biological role, required during biogenesis of c-type cytochromes (cytochrome c6 and cytochrome f) at the step of heme attachment. The chain is Cytochrome c biogenesis protein Ccs1 from Porphyra purpurea (Red seaweed).